The primary structure comprises 225 residues: Polyadenylate-binding protein 2 (225 aa).

Acidic residues predominate over residues 1–36 (MADEDISLNEDQLLESMEETNGEQETEIVTETEEEG). The interval 1–42 (MADEDISLNEDQLLESMEETNGEQETEIVTETEEEGSMQIDP) is disordered. The stretch at 14–74 (LESMEETNGE…QSEVDKQMAG (61 aa)) forms a coiled coil. One can recognise an RRM domain in the interval 96–173 (RSVYVGNVDY…RQIKVMSKRT (78 aa)).

The protein resides in the nucleus. It localises to the cytoplasm. Functionally, involved in the 3'-end formation of mRNA precursors (pre-mRNA) by the addition of a poly(A) tail of 200-250 nt to the upstream cleavage product. Stimulates poly(A) polymerase (PAPOLA) conferring processivity on the poly(A) tail elongation reaction and also controls the poly(A) tail length. Increases the affinity of poly(A) polymerase for RNA. Binds to poly(A) and to poly(G) with high affinity. May protect the poly(A) tail from degradation. This Drosophila pseudoobscura pseudoobscura (Fruit fly) protein is Polyadenylate-binding protein 2.